A 118-amino-acid chain; its full sequence is MKGADRHFYIVPVGGETTVDFFEWRLVKGYLFSDFSVLYIPALAKESSIVTSAALALTRRDCKADLAQFMDGARNLTVTNGESPNSDWMFEYLSKLCLNVSRLTGSGRGETVYWEEER.

This Snake adenovirus serotype 1 (SnAdV-1) protein is Protein LH1.